The sequence spans 182 residues: Adenine phosphoribosyltransferase (182 aa).

The protein belongs to the purine/pyrimidine phosphoribosyltransferase family. As to quaternary structure, homodimer.

It is found in the cytoplasm. The catalysed reaction is AMP + diphosphate = 5-phospho-alpha-D-ribose 1-diphosphate + adenine. The protein operates within purine metabolism; AMP biosynthesis via salvage pathway; AMP from adenine: step 1/1. In terms of biological role, catalyzes a salvage reaction resulting in the formation of AMP, that is energically less costly than de novo synthesis. This is Adenine phosphoribosyltransferase from Pseudomonas fluorescens (strain Pf0-1).